The chain runs to 343 residues: Protein rax1 (343 aa).

The Cytoplasmic segment spans residues 1 to 235 (MASAPRVSEV…NLNPLTCTGR (235 aa)). The region spanning 109 to 228 (ELSNEQTINS…LNHKFKHNLN (120 aa)) is the RGS domain. The chain crosses the membrane as a helical span at residues 236–256 (FIIGYVSTFAAYWLGFCGIFL). Topologically, residues 257–263 (DYSRRKR) are extracellular. Residues 264-284 (VWTLLPFAFGFYNLICTWSKH) traverse the membrane as a helical segment. Residues 285-317 (DPVLALLGYSEVKPFHYEKVLQPSIRLSLNRRA) are Cytoplasmic-facing. Residues 318–338 (IFVLSIIVLIVGANTAIFSCV) form a helical membrane-spanning segment. Residues 339 to 343 (PSIRL) are Extracellular-facing.

It localises to the cell membrane. Its subcellular location is the endoplasmic reticulum membrane. Functionally, may be involved in cell polarization and division. The chain is Protein rax1 (rax1) from Schizosaccharomyces pombe (strain 972 / ATCC 24843) (Fission yeast).